The chain runs to 157 residues: SsrA-binding protein (157 aa).

The protein belongs to the SmpB family.

It localises to the cytoplasm. Its function is as follows. Required for rescue of stalled ribosomes mediated by trans-translation. Binds to transfer-messenger RNA (tmRNA), required for stable association of tmRNA with ribosomes. tmRNA and SmpB together mimic tRNA shape, replacing the anticodon stem-loop with SmpB. tmRNA is encoded by the ssrA gene; the 2 termini fold to resemble tRNA(Ala) and it encodes a 'tag peptide', a short internal open reading frame. During trans-translation Ala-aminoacylated tmRNA acts like a tRNA, entering the A-site of stalled ribosomes, displacing the stalled mRNA. The ribosome then switches to translate the ORF on the tmRNA; the nascent peptide is terminated with the 'tag peptide' encoded by the tmRNA and targeted for degradation. The ribosome is freed to recommence translation, which seems to be the essential function of trans-translation. The protein is SsrA-binding protein of Limosilactobacillus fermentum (strain NBRC 3956 / LMG 18251) (Lactobacillus fermentum).